Consider the following 346-residue polypeptide: Putative cytochrome bd menaquinol oxidase subunit II (346 aa).

9 helical membrane-spanning segments follow: residues 7–27 (ALIA…MATM), 63–83 (VFIV…TFVL), 87–107 (LLIP…FLVF), 119–139 (YISG…LPVT), 164–184 (AYSF…LLLA), 201–221 (KSAL…MVTM), 236–256 (FSWI…LFLP), 269–289 (LALV…GRAH), and 312–332 (ALFA…FFFW).

The protein belongs to the cytochrome ubiquinol oxidase subunit 2 family.

It is found in the cell membrane. In terms of biological role, may have a role in sporulation. Can compensate for the loss of cytochrome aa3. This Bacillus subtilis (strain 168) protein is Putative cytochrome bd menaquinol oxidase subunit II (ythB).